Reading from the N-terminus, the 418-residue chain is MTARRGSAPHRIATISVLTSPLAQPGGGDAGGLNVYVVETARRFAETGVQVDIFTRAAAPRLPPIVELCDGVVVRHVPAGPPREVDKGALPRVLGEFTAGMLRAPGDYDVVHAHHWLSGRVGALVARSRGVPLVQSMHSLGLVKNAVLPGEDGSAPPAQIAGESAVIAAADRLVANTAQEADQLIALYGAAPERVHTVHPGVDLELFRPGDRDQARARLGLPHDAFVLLFAGRVQRLKGPDILMRAAAQLLHADLDLAQRLVVAFVGGPSGELQADPDQLTKLATDLGIGEQVRVEPPCPHPELADWYRAATLVVVPSRAETFGLVAVEAQACGTPVVAAAVGGLQTAVRAGVSGVLVEGHDPARYAEVIRALIDDPARLTALRAGALQHAAGFGWSEAVDRLLAVYRSAIEGGRGRP.

Residues 24–25 and glycine 32 each bind UDP-N-acetyl-alpha-D-glucosamine; that span reads QP. Residues 29–34, lysine 87, histidine 115, serine 139, and glutamine 159 each bind 1D-myo-inositol 3-phosphate; that span reads DAGGLN. Residues arginine 233 and lysine 238 each coordinate UDP-N-acetyl-alpha-D-glucosamine. 3 residues coordinate Mg(2+): tyrosine 308, arginine 309, and alanine 311. The UDP-N-acetyl-alpha-D-glucosamine site is built by glutamate 321 and glutamate 329. Threonine 335 contributes to the Mg(2+) binding site.

The protein belongs to the glycosyltransferase group 1 family. MshA subfamily. Homodimer.

The enzyme catalyses 1D-myo-inositol 3-phosphate + UDP-N-acetyl-alpha-D-glucosamine = 1D-myo-inositol 2-acetamido-2-deoxy-alpha-D-glucopyranoside 3-phosphate + UDP + H(+). Its function is as follows. Catalyzes the transfer of a N-acetyl-glucosamine moiety to 1D-myo-inositol 3-phosphate to produce 1D-myo-inositol 2-acetamido-2-deoxy-glucopyranoside 3-phosphate in the mycothiol biosynthesis pathway. The sequence is that of D-inositol 3-phosphate glycosyltransferase 1 from Catenulispora acidiphila (strain DSM 44928 / JCM 14897 / NBRC 102108 / NRRL B-24433 / ID139908).